The sequence spans 67 residues: Large ribosomal subunit protein uL29 (67 aa).

The protein belongs to the universal ribosomal protein uL29 family.

The polypeptide is Large ribosomal subunit protein uL29 (Wolbachia pipientis wMel).